The chain runs to 65 residues: Period circadian protein (65 aa).

The tract at residues 1–65 is disordered; the sequence is EGSGGSGSSG…VTLTESLLNK (65 aa). The span at 18–28 shows a compositional bias: polar residues; that stretch reads VRMSSVTNTSN. Low complexity predominate over residues 29–38; that stretch reads AGTGTSAGDN. A compositionally biased stretch (polar residues) spans 56–65; that stretch reads VTLTESLLNK.

As to quaternary structure, forms a heterodimer with timeless (TIM); the complex then translocates into the nucleus. Post-translationally, phosphorylated with a circadian rhythmicity, probably by the double-time protein (dbt). Phosphorylation could be implicated in the stability of per monomer and in the formation of heterodimer per-tim.

It localises to the nucleus. The protein resides in the cytoplasm. It is found in the perinuclear region. Essential for biological clock functions. Determines the period length of circadian and ultradian rhythms; an increase in PER dosage leads to shortened circadian rhythms and a decrease leads to lengthened circadian rhythms. Essential for the circadian rhythmicity of locomotor activity, eclosion behavior, and for the rhythmic component of the male courtship song that originates in the thoracic nervous system. The biological cycle depends on the rhythmic formation and nuclear localization of the TIM-PER complex. Light induces the degradation of TIM, which promotes elimination of PER. Nuclear activity of the heterodimer coordinatively regulates PER and TIM transcription through a negative feedback loop. Behaves as a negative element in circadian transcriptional loop. Does not appear to bind DNA, suggesting indirect transcriptional inhibition. In Drosophila mojavensis (Fruit fly), this protein is Period circadian protein (per).